The chain runs to 360 residues: Phenylalanine--tRNA ligase alpha subunit (360 aa).

Glu260 lines the Mg(2+) pocket.

The protein belongs to the class-II aminoacyl-tRNA synthetase family. Phe-tRNA synthetase alpha subunit type 1 subfamily. As to quaternary structure, tetramer of two alpha and two beta subunits. Mg(2+) serves as cofactor.

The protein localises to the cytoplasm. The catalysed reaction is tRNA(Phe) + L-phenylalanine + ATP = L-phenylalanyl-tRNA(Phe) + AMP + diphosphate + H(+). This chain is Phenylalanine--tRNA ligase alpha subunit, found in Methylobacterium sp. (strain 4-46).